The primary structure comprises 316 residues: Ferrochelatase (316 aa).

Residues H186 and E268 each contribute to the Fe cation site.

It belongs to the ferrochelatase family.

The protein resides in the cytoplasm. The catalysed reaction is heme b + 2 H(+) = protoporphyrin IX + Fe(2+). It participates in porphyrin-containing compound metabolism; protoheme biosynthesis; protoheme from protoporphyrin-IX: step 1/1. In terms of biological role, catalyzes the ferrous insertion into protoporphyrin IX. In Deinococcus radiodurans (strain ATCC 13939 / DSM 20539 / JCM 16871 / CCUG 27074 / LMG 4051 / NBRC 15346 / NCIMB 9279 / VKM B-1422 / R1), this protein is Ferrochelatase.